The primary structure comprises 764 residues: 5-methyltetrahydropteroyltriglutamate--homocysteine methyltransferase (764 aa).

5-methyltetrahydropteroyltri-L-glutamate contacts are provided by residues 17 to 20 (RELK) and K117. Residues 437–439 (IGS) and E490 each bind L-homocysteine. Residues 437 to 439 (IGS) and E490 contribute to the L-methionine site. Residues 521 to 522 (RC) and W567 contribute to the 5-methyltetrahydropteroyltri-L-glutamate site. D605 is a binding site for L-homocysteine. L-methionine is bound at residue D605. Position 611 (E611) interacts with 5-methyltetrahydropteroyltri-L-glutamate. H647, C649, and E671 together coordinate Zn(2+). The active-site Proton donor is the H701. C733 contacts Zn(2+).

This sequence belongs to the vitamin-B12 independent methionine synthase family. Zn(2+) serves as cofactor.

It catalyses the reaction 5-methyltetrahydropteroyltri-L-glutamate + L-homocysteine = tetrahydropteroyltri-L-glutamate + L-methionine. It functions in the pathway amino-acid biosynthesis; L-methionine biosynthesis via de novo pathway; L-methionine from L-homocysteine (MetE route): step 1/1. Catalyzes the transfer of a methyl group from 5-methyltetrahydrofolate to homocysteine resulting in methionine formation. This chain is 5-methyltetrahydropteroyltriglutamate--homocysteine methyltransferase, found in Blochmanniella pennsylvanica (strain BPEN).